Here is a 228-residue protein sequence, read N- to C-terminus: Large ribosomal subunit protein uL3 (228 aa).

Belongs to the universal ribosomal protein uL3 family. As to quaternary structure, part of the 50S ribosomal subunit. Forms a cluster with proteins L14 and L19.

Functionally, one of the primary rRNA binding proteins, it binds directly near the 3'-end of the 23S rRNA, where it nucleates assembly of the 50S subunit. The chain is Large ribosomal subunit protein uL3 from Leuconostoc mesenteroides subsp. mesenteroides (strain ATCC 8293 / DSM 20343 / BCRC 11652 / CCM 1803 / JCM 6124 / NCDO 523 / NBRC 100496 / NCIMB 8023 / NCTC 12954 / NRRL B-1118 / 37Y).